Reading from the N-terminus, the 221-residue chain is DNA mismatch repair protein MutH (221 aa).

The protein belongs to the MutH family.

The protein localises to the cytoplasm. Functionally, sequence-specific endonuclease that cleaves unmethylated GATC sequences. It is involved in DNA mismatch repair. This chain is DNA mismatch repair protein MutH, found in Vibrio cholerae serotype O1 (strain ATCC 39541 / Classical Ogawa 395 / O395).